We begin with the raw amino-acid sequence, 167 residues long: Small ribosomal subunit protein uS9 (167 aa).

Residues Met-1–Ser-41 are disordered. Residues Thr-17–Ser-26 are compositionally biased toward polar residues.

It belongs to the universal ribosomal protein uS9 family.

This is Small ribosomal subunit protein uS9 from Renibacterium salmoninarum (strain ATCC 33209 / DSM 20767 / JCM 11484 / NBRC 15589 / NCIMB 2235).